A 666-amino-acid polypeptide reads, in one-letter code: tRNA 5-methylaminomethyl-2-thiouridine biosynthesis bifunctional protein MnmC (666 aa).

Residues methionine 1 to glutamate 245 form a tRNA (mnm(5)s(2)U34)-methyltransferase region. An FAD-dependent cmnm(5)s(2)U34 oxidoreductase region spans residues isoleucine 270–lysine 666.

This sequence in the N-terminal section; belongs to the methyltransferase superfamily. tRNA (mnm(5)s(2)U34)-methyltransferase family. In the C-terminal section; belongs to the DAO family. FAD serves as cofactor.

Its subcellular location is the cytoplasm. It catalyses the reaction 5-aminomethyl-2-thiouridine(34) in tRNA + S-adenosyl-L-methionine = 5-methylaminomethyl-2-thiouridine(34) in tRNA + S-adenosyl-L-homocysteine + H(+). Its function is as follows. Catalyzes the last two steps in the biosynthesis of 5-methylaminomethyl-2-thiouridine (mnm(5)s(2)U) at the wobble position (U34) in tRNA. Catalyzes the FAD-dependent demodification of cmnm(5)s(2)U34 to nm(5)s(2)U34, followed by the transfer of a methyl group from S-adenosyl-L-methionine to nm(5)s(2)U34, to form mnm(5)s(2)U34. This is tRNA 5-methylaminomethyl-2-thiouridine biosynthesis bifunctional protein MnmC from Salmonella paratyphi B (strain ATCC BAA-1250 / SPB7).